The chain runs to 451 residues: Cyclin-dependent kinase 14 (451 aa).

Residues S60 and S77 each carry the phosphoserine modification. The disordered stretch occupies residues 84 to 114 (NFKTSSTGKESPKVRRHSSPSSPTSPKFGKA). S116 carries the post-translational modification Phosphoserine. Residues 117-401 (YEKLEKLGEG…AQAALSHEYF (285 aa)) form the Protein kinase domain. Residues 123 to 131 (LGEGSYATV) and K146 each bind ATP. The active-site Proton acceptor is the D238.

Belongs to the protein kinase superfamily. CMGC Ser/Thr protein kinase family. CDC2/CDKX subfamily. As to quaternary structure, found in a complex with LRP6, CCNY and CAPRIN2 during G2/M stage; CAPRIN2 functions as a scaffold for the complex by binding to CCNY via its N terminus and to CDK14 via its C terminus. Interacts with CCNY; CCNY mediates its recruitment to the plasma membrane and promotes phosphorylation of LRP6. Interacts with CCDN3 and CDKN1A. Interacts with SEPT8. Interacts with 14-3-3 proteina YWHAB, YWHAE, YWHAH and YWHAQ.

The protein resides in the cell membrane. The protein localises to the cytoplasm. It localises to the nucleus. The enzyme catalyses L-seryl-[protein] + ATP = O-phospho-L-seryl-[protein] + ADP + H(+). The catalysed reaction is L-threonyl-[protein] + ATP = O-phospho-L-threonyl-[protein] + ADP + H(+). Serine/threonine-protein kinase activity is promoted by associated cyclins CCDN3 and CCNY and repressed by CDKN1A. In terms of biological role, serine/threonine-protein kinase involved in the control of the eukaryotic cell cycle, whose activity is controlled by an associated cyclin. Acts as a cell-cycle regulator of Wnt signaling pathway during G2/M phase by mediating the phosphorylation of LRP6 at 'Ser-1490', leading to the activation of the Wnt signaling pathway. Acts as a regulator of cell cycle progression and cell proliferation via its interaction with CCDN3. Phosphorylates RB1 in vitro, however the relevance of such result remains to be confirmed in vivo. May also play a role in meiosis, neuron differentiation and may indirectly act as a negative regulator of insulin-responsive glucose transport. This chain is Cyclin-dependent kinase 14 (CDK14), found in Plecturocebus moloch (Dusky titi monkey).